The sequence spans 708 residues: Retrotransposon-derived protein PEG10 (708 aa).

Residues 1 to 50 are a coiled coil; it reads MTERRRDELSEEINNLREKVMKQSEENNNLQSQVQKLTEENTTLREQVEP. Positions 21 to 74 are disordered; sequence MKQSEENNNLQSQVQKLTEENTTLREQVEPTPEDEDDDIELRGAAAAAAPPPPI. Positions 26-36 are enriched in polar residues; that stretch reads ENNNLQSQVQK. Over residues 37–48 the composition is skewed to basic and acidic residues; the sequence is LTEENTTLREQV. The segment at 76-275 is necessary for interaction with ACVRL1; it reads EECPEDLPEK…HQVDPTEPVG (200 aa). The CCHC-type zinc finger occupies 293–310; it reads NLCLYCGTGGHYADNCPA. The tract at residues 310–344 is disordered; that stretch reads AKASKSSPAGKLPGPAVEGPSATGPEIIRSPQDDA. Residues lysine 311 and lysine 314 each participate in a glycyl lysine isopeptide (Lys-Gly) (interchain with G-Cter in ubiquitin) cross-link. 2 positions are modified to phosphoserine: serine 316 and leucine 321. An omega-N-methylarginine mark is found at arginine 507, arginine 598, and arginine 611. Residues 683 to 708 are disordered; it reads PVPQYPPPQPPPPPPPPPPPPSYSTL.

Homooligomer; homooligomerizes into virion-like capsids. Interacts with ACVRL1. Interacts with SIAH1 and SIAH2. Post-translationally, undergoes proteolytic cleavage. As to expression, expressed in the cytotrophoblast layer but not in the overlying syncytiotrophoblast of the placenta. Expressed in prostate and breast carcinomas but not in normal breast and prostate epithelial cells. Expressed in the Hep-G2 cell line (at protein level). Expressed in brain, liver, spleen, kidney, thymus, lung, ovary, testis, reactive lymph node, skeletal muscle, adipose tissue and placenta. Expressed in pancreatic and hepatocellular carcinomas (HCC).

It is found in the extracellular vesicle membrane. The protein resides in the cytoplasm. The protein localises to the nucleus. Functionally, retrotransposon-derived protein that binds its own mRNA and self-assembles into virion-like capsids. Forms virion-like extracellular vesicles that encapsulate their own mRNA and are released from cells, enabling intercellular transfer of PEG10 mRNA. Binds its own mRNA in the 5'-UTR region, in the region near the boundary between the nucleocapsid (NC) and protease (PRO) coding sequences and in the beginning of the 3'-UTR region. Involved in placenta formation: required for trophoblast stem cells differentiation. Involved at the immediate early stage of adipocyte differentiation. Overexpressed in many cancers and enhances tumor progression: promotes cell proliferation by driving cell cycle progression from G0/G1. Enhances cancer progression by inhibiting the TGF-beta signaling, possibly via interaction with the TGF-beta receptor ACVRL1. May bind to the 5'-GCCTGTCTTT-3' DNA sequence of the MB1 domain in the myelin basic protein (MBP) promoter; additional evidences are however required to confirm this result. This chain is Retrotransposon-derived protein PEG10, found in Homo sapiens (Human).